We begin with the raw amino-acid sequence, 80 residues long: Cell division activator CedA (80 aa).

It belongs to the CedA family.

In terms of biological role, activates the cell division inhibited by chromosomal DNA over-replication. The chain is Cell division activator CedA from Escherichia coli O1:K1 / APEC.